The following is a 377-amino-acid chain: Heat stress transcription factor B-2b (377 aa).

A disordered region spans residues 1 to 56 (MPGEQTGETPTVAGVGGGGAGCSAGNSGGSSGCGAGGGGGGSGGGGGGGGDSQRSI). A compositionally biased stretch (gly residues) spans 14–51 (GVGGGGAGCSAGNSGGSSGCGAGGGGGGSGGGGGGGGD). Residues 57–151 (PTPFLTKTYQ…LLRDIQRRKI (95 aa)) mediate DNA binding. The tract at residues 220–265 (TTSCTTAPELVEENERLRKDNERLRKEMTKLKGLYANIYTLMANFT) is hydrophobic repeat HR-A/B. The Nuclear localization signal motif lies at 323–327 (KRARR). A disordered region spans residues 326–377 (RREEELGAAEEEDDDRREAAAQEGEQSSDVKAEPMEENNSGNHNGSWLELGK). The segment covering 331–340 (LGAAEEEDDD) has biased composition (acidic residues).

This sequence belongs to the HSF family. Class B subfamily. Homotrimer. Exhibits temperature-dependent phosphorylation.

Its subcellular location is the nucleus. In terms of biological role, transcriptional regulator that specifically binds DNA sequence 5'-AGAAnnTTCT-3' known as heat shock promoter elements (HSE). The polypeptide is Heat stress transcription factor B-2b (HSFB2B) (Arabidopsis thaliana (Mouse-ear cress)).